Reading from the N-terminus, the 269-residue chain is MSVLESIIDGVREDLAVRESTIPFDEIKQRSAAAPPPRDVMAALHAPGVGVIAEVKRRSPSKGELADIAEPAELAADYAAAGARVISVLTEQRRFGGSLADFDAVRAKVSAPLLRKDFIVSPYQVHEARAHGADMVLLIVAALEQVALEALLDRVESLGMTALVEVHTAEEADRALEAGAKVIGINARNLHTLEVDRDVFGRIAPGLPVEVLKVAESGVRGPSDLMAYAGSGADAVLVGEGLVTSDNPRTAVTQLVTAGSHPACPRPSR.

Belongs to the TrpC family.

The catalysed reaction is 1-(2-carboxyphenylamino)-1-deoxy-D-ribulose 5-phosphate + H(+) = (1S,2R)-1-C-(indol-3-yl)glycerol 3-phosphate + CO2 + H2O. It functions in the pathway amino-acid biosynthesis; L-tryptophan biosynthesis; L-tryptophan from chorismate: step 4/5. This Saccharopolyspora erythraea (strain ATCC 11635 / DSM 40517 / JCM 4748 / NBRC 13426 / NCIMB 8594 / NRRL 2338) protein is Indole-3-glycerol phosphate synthase.